The primary structure comprises 117 residues: Envelope glycoprotein J (117 aa).

The first 26 residues, 1–26, serve as a signal peptide directing secretion; the sequence is MRSLLFVVGAWVAAAVTHLTPNAALA. The interval 26–64 is disordered; it reads ATGTTPTVGANSTADPGTGANGTTVPAAGTPANSTTAAE. Over residues 27 to 40 the composition is skewed to polar residues; sequence TGTTPTVGANSTAD. Residues 27–73 are Extracellular-facing; that stretch reads TGTTPTVGANSTADPGTGANGTTVPAAGTPANSTTAAETPAPFPPVD. 3 N-linked (GlcNAc...) asparagine; by host glycosylation sites follow: Asn-36, Asn-46, and Asn-58. Residues 74 to 94 form a helical membrane-spanning segment; that stretch reads FALPVVIGGLCALTLAAMGAG. Topologically, residues 95-117 are cytoplasmic; it reads ALLHRCCRRAAARRRQRAAYVYA.

It belongs to the alphaherpesvirinae glycoprotein J family.

It is found in the host Golgi apparatus membrane. Its subcellular location is the host endoplasmic reticulum membrane. The protein localises to the host endosome membrane. Its function is as follows. Inhibits host cell apoptosis. Induces an increase in reactive oxygen species (ROS) in the host cell. The protein is Envelope glycoprotein J (gJ) of Homo sapiens (Human).